A 512-amino-acid chain; its full sequence is Glutathione-binding protein GsiB (512 aa).

The N-terminal stretch at 1 to 26 (MTQFITHKWLAALGLASSIAAFPALA) is a signal peptide.

This sequence belongs to the bacterial solute-binding protein 5 family. In terms of assembly, the complex is composed of two ATP-binding proteins (GsiA), two transmembrane proteins (GsiC and GsiD) and a solute-binding protein (GsiB).

It localises to the periplasm. In terms of biological role, part of the ABC transporter complex GsiABCD involved in glutathione import. Binds glutathione. This Salmonella typhimurium (strain LT2 / SGSC1412 / ATCC 700720) protein is Glutathione-binding protein GsiB.